The chain runs to 356 residues: 3-isopropylmalate dehydrogenase (356 aa).

Residues R95, R105, R133, and D223 each contribute to the substrate site. Residues D223, D247, and D251 each coordinate Mg(2+). 281-293 (GSAPDIAGQNKAN) is a binding site for NAD(+).

The protein belongs to the isocitrate and isopropylmalate dehydrogenases family. LeuB type 1 subfamily. Homodimer. Mg(2+) is required as a cofactor. Mn(2+) serves as cofactor.

It localises to the cytoplasm. It catalyses the reaction (2R,3S)-3-isopropylmalate + NAD(+) = 4-methyl-2-oxopentanoate + CO2 + NADH. It functions in the pathway amino-acid biosynthesis; L-leucine biosynthesis; L-leucine from 3-methyl-2-oxobutanoate: step 3/4. Functionally, catalyzes the oxidation of 3-carboxy-2-hydroxy-4-methylpentanoate (3-isopropylmalate) to 3-carboxy-4-methyl-2-oxopentanoate. The product decarboxylates to 4-methyl-2 oxopentanoate. The polypeptide is 3-isopropylmalate dehydrogenase (Neisseria gonorrhoeae (strain ATCC 700825 / FA 1090)).